Reading from the N-terminus, the 216-residue chain is Ras-related protein Rab-5C (216 aa).

Positions 30, 31, 33, 34, 35, 36, 47, 48, 53, and 79 each coordinate GTP. Serine 35 lines the Mg(2+) pocket. Short sequence motifs (switch) lie at residues 45–57 (QFHEYQESTIGAA) and 78–94 (AGQERYHSLAPMYYRGA). Threonine 53 provides a ligand contact to Mg(2+). A Phosphoserine; by LRRK2 modification is found at serine 85. GTP contacts are provided by asparagine 134, lysine 135, aspartate 137, alanine 165, and lysine 166. Residues 185–216 (NEPQNATGAPGRNRGVDLQENNPASRSQCCSN) form a disordered region. Polar residues predominate over residues 203–216 (QENNPASRSQCCSN). 2 S-geranylgeranyl cysteine lipidation sites follow: cysteine 213 and cysteine 214.

It belongs to the small GTPase superfamily. Rab family. In terms of assembly, interacts with EEA1. Interacts with INCA1. Interacts with GDI1, GDI2, CHML and CHM; phosphorylation at Ser-85 disrupts this interaction. Requires Mg(2+) as cofactor. Post-translationally, phosphorylation of Ser-85 in the switch II region by LRRK2 prevents the association of RAB regulatory proteins, including CHM, CHML and RAB GDP dissociation inhibitors GDI1 and GDI2. In terms of processing, (Microbial infection) Glycosylated on arginine residues by S.typhimurium protein Ssek3.

The protein resides in the cell membrane. The protein localises to the early endosome membrane. It is found in the melanosome. The enzyme catalyses GTP + H2O = GDP + phosphate + H(+). With respect to regulation, regulated by guanine nucleotide exchange factors (GEFs) which promote the exchange of bound GDP for free GTP. Regulated by GTPase activating proteins (GAPs) which increase the GTP hydrolysis activity. Inhibited by GDP dissociation inhibitors (GDIs). Functionally, the small GTPases Rab are key regulators of intracellular membrane trafficking, from the formation of transport vesicles to their fusion with membranes. Rabs cycle between an inactive GDP-bound form and an active GTP-bound form that is able to recruit to membranes different sets of downstream effectors directly responsible for vesicle formation, movement, tethering and fusion. The protein is Ras-related protein Rab-5C of Homo sapiens (Human).